The sequence spans 163 residues: Ribonuclease P protein subunit p25-like protein (163 aa).

Disordered regions lie at residues 1 to 24 (MEQY…LPPD) and 126 to 163 (LDPS…DTRS). The segment covering 153 to 163 (RPRRRARDTRS) has biased composition (basic residues).

Belongs to the histone-like Alba family.

It is found in the nucleus. Functionally, may be a component of ribonuclease P or MRP. This is Ribonuclease P protein subunit p25-like protein (Rpp25l) from Mus musculus (Mouse).